The primary structure comprises 394 residues: Deoxyguanosinetriphosphate triphosphohydrolase-like protein (394 aa).

The segment at 1–34 (MSSSPFFVPRAPYAEDPAKSRGRRFPEDESRTRT) is disordered. Residues 16-34 (DPAKSRGRRFPEDESRTRT) are compositionally biased toward basic and acidic residues. The 141-residue stretch at 70–210 (RLTHSLEVAQ…AALADDIAYN (141 aa)) folds into the HD domain.

It belongs to the dGTPase family. Type 2 subfamily.

The polypeptide is Deoxyguanosinetriphosphate triphosphohydrolase-like protein (Caulobacter sp. (strain K31)).